A 130-amino-acid polypeptide reads, in one-letter code: Biotin carboxyl carrier protein (130 aa).

The disordered stretch occupies residues 20–64; that stretch reads EISESSVPAATPITPTTENTRAASDQKQQSQTPSPAATASAANTM. Positions 23 to 46 are enriched in polar residues; that stretch reads ESSVPAATPITPTTENTRAASDQK. Positions 47-64 are enriched in low complexity; sequence QQSQTPSPAATASAANTM. Positions 55–130 constitute a Biotinyl-binding domain; sequence AATASAANTM…NAGDNLITIA (76 aa). Lysine 96 is modified (N6-biotinyllysine).

The polypeptide is Biotin carboxyl carrier protein (bcc) (Streptococcus mutans serotype c (strain ATCC 700610 / UA159)).